We begin with the raw amino-acid sequence, 269 residues long: 4-hydroxy-tetrahydrodipicolinate reductase (269 aa).

NAD(+) contacts are provided by residues 10-15, glutamate 36, 99-101, and 123-126; these read GANGRM, GTT, and AANF. Catalysis depends on histidine 156, which acts as the Proton donor/acceptor. Histidine 157 contributes to the (S)-2,3,4,5-tetrahydrodipicolinate binding site. Lysine 160 serves as the catalytic Proton donor. Position 166–167 (166–167) interacts with (S)-2,3,4,5-tetrahydrodipicolinate; sequence GT.

The protein belongs to the DapB family.

It localises to the cytoplasm. It carries out the reaction (S)-2,3,4,5-tetrahydrodipicolinate + NAD(+) + H2O = (2S,4S)-4-hydroxy-2,3,4,5-tetrahydrodipicolinate + NADH + H(+). The enzyme catalyses (S)-2,3,4,5-tetrahydrodipicolinate + NADP(+) + H2O = (2S,4S)-4-hydroxy-2,3,4,5-tetrahydrodipicolinate + NADPH + H(+). It functions in the pathway amino-acid biosynthesis; L-lysine biosynthesis via DAP pathway; (S)-tetrahydrodipicolinate from L-aspartate: step 4/4. Its function is as follows. Catalyzes the conversion of 4-hydroxy-tetrahydrodipicolinate (HTPA) to tetrahydrodipicolinate. In Neisseria meningitidis serogroup A / serotype 4A (strain DSM 15465 / Z2491), this protein is 4-hydroxy-tetrahydrodipicolinate reductase.